The sequence spans 281 residues: MKLTEEQVAQYKKDGFLIIRNFNTTEEIDIVRGEMKKLIDELDTPSTISIFTTSEQERKVDDYFLGSGDKIRYFFEKGSIEDGKLIVPKDMAFNKVGHALHDLNPKFEEFSYSQKIHDLIYSLGIYNKALSGIMYIFKNQKIGGEVDIHQDSTFLHTTPLTTHAIWFAFEDSTIENGCLRGLPGSHTEGITRRFITDPNSESGCSFIKLAEDKQYNKSDFVALECKKGDIILLDGSVVHYSEPNTSPNSRHAYTLHFIEGDNGVIYENDNWLQSAKPFRVL.

2-oxoglutarate-binding positions include Lys-95, Met-134, His-149–Asp-151, and Trp-166. Fe cation is bound by residues His-149 and Asp-151. A Fe cation-binding site is contributed by His-239. 2-oxoglutarate-binding residues include Ser-241 and Arg-250.

This sequence belongs to the PhyH family. PHYHD1 subfamily. Requires Fe cation as cofactor.

In terms of biological role, has alpha-ketoglutarate-dependent dioxygenase activity. Does not show detectable activity towards fatty acid CoA thioesters. Is not expected to be active with phytanoyl CoA. The sequence is that of Phytanoyl-CoA dioxygenase domain-containing protein 1 homolog (phyhd1) from Dictyostelium discoideum (Social amoeba).